Here is a 97-residue protein sequence, read N- to C-terminus: MALTKADIAETLSDKFGFNKRESKELVEQFYDEMSEVLVKGEQIKLSGFGNFELKDKSARPGRNPRTGEDVPISARRVVTFKPGQKLRAQIDNYGTA.

It belongs to the bacterial histone-like protein family. As to quaternary structure, heterodimer of an alpha and a beta chain.

In terms of biological role, this protein is one of the two subunits of integration host factor, a specific DNA-binding protein that functions in genetic recombination as well as in transcriptional and translational control. The polypeptide is Integration host factor subunit alpha (Hydrogenovibrio crunogenus (strain DSM 25203 / XCL-2) (Thiomicrospira crunogena)).